The following is a 914-amino-acid chain: High affinity cAMP-specific and IBMX-insensitive 3',5'-cyclic phosphodiesterase 8 (914 aa).

Disordered stretches follow at residues 1–27 (MGCS…PLDA) and 113–138 (RRAT…HRKS). Residues 116–129 (TGSTGTSGTSSSGG) show a composition bias toward low complexity. In terms of domain architecture, PAS spans 312–359 (TQQALYTALHRLKEVVLITDDLLRIQYANRATERLLNMRLDEIISKQL). The PDEase domain occupies 558–893 (TAAIVPAKMK…SQWKKYDEQG (336 aa)). Catalysis depends on His-640, which acts as the Proton donor. The a divalent metal cation site is built by His-644, His-682, Asp-683, and Asp-799.

It belongs to the cyclic nucleotide phosphodiesterase family. PDE8 subfamily. Requires a divalent metal cation as cofactor. Expressed in Malpighian tubules and head.

The catalysed reaction is 3',5'-cyclic AMP + H2O = AMP + H(+). It participates in purine metabolism; 3',5'-cyclic AMP degradation; AMP from 3',5'-cyclic AMP: step 1/1. Functionally, hydrolyzes the second messenger cAMP, which is a key regulator of many important physiological processes. Involved in the positive regulation of MAP kinase signaling and in inhibiting oxidative stress-induced cell death. The polypeptide is High affinity cAMP-specific and IBMX-insensitive 3',5'-cyclic phosphodiesterase 8 (Drosophila melanogaster (Fruit fly)).